The sequence spans 179 residues: RNA polymerase sigma-E factor (179 aa).

The Polymerase core binding motif lies at 36–49; it reads DLLQTALVRTYGRW. A DNA-binding region (H-T-H motif) is located at residues 130 to 149; the sequence is TEETAAALGMSAGTVKSTLH.

This sequence belongs to the sigma-70 factor family. ECF subfamily.

The protein resides in the cytoplasm. In terms of biological role, sigma factors are initiation factors that promote the attachment of RNA polymerase to specific initiation sites and are then released. This sigma factor is required for normal cell wall integrity; it is recruited by RNA polymerase to transcribe genes with cell wall-related functions. The sequence is that of RNA polymerase sigma-E factor (sigE) from Streptomyces avermitilis (strain ATCC 31267 / DSM 46492 / JCM 5070 / NBRC 14893 / NCIMB 12804 / NRRL 8165 / MA-4680).